Reading from the N-terminus, the 194-residue chain is CASP-like protein 2C1 (194 aa).

The Cytoplasmic portion of the chain corresponds to 1–18 (MSSYMEAAAAARAAEAKT). A helical transmembrane segment spans residues 19-39 (EGLLRGACALLAAAAALLVGL). The Extracellular portion of the chain corresponds to 40–59 (NTQTETVLFIRKKATVKDVQ). A helical membrane pass occupies residues 60 to 80 (ALWVLAMAAAAAAGYHLLQLL). Over 81 to 109 (RCFYLSRFADGKPCRHRRAIAWLCFLLDK) the chain is Cytoplasmic. The helical transmembrane segment at 110–130 (GCAYITFATTVAAAQACVVAL) threads the bilayer. Residues 131–151 (YGTHALQWTKLCNIYTRFCEQ) lie on the Extracellular side of the membrane. Residues 152 to 172 (VAGSLVCAMLAAVGTALLSVV) traverse the membrane as a helical segment. The Cytoplasmic segment spans residues 173–194 (SARNLFRLYPSMLSPPPSSFVG).

This sequence belongs to the Casparian strip membrane proteins (CASP) family. Homodimer and heterodimers.

Its subcellular location is the cell membrane. The polypeptide is CASP-like protein 2C1 (Oryza sativa subsp. japonica (Rice)).